We begin with the raw amino-acid sequence, 256 residues long: tRNA (guanine-N(7)-)-methyltransferase (256 aa).

Glu-85, Glu-110, Asp-137, and Asp-159 together coordinate S-adenosyl-L-methionine. Asp-159 is an active-site residue. The substrate site is built by Lys-163 and Asp-195.

The protein belongs to the class I-like SAM-binding methyltransferase superfamily. TrmB family.

The catalysed reaction is guanosine(46) in tRNA + S-adenosyl-L-methionine = N(7)-methylguanosine(46) in tRNA + S-adenosyl-L-homocysteine. Its pathway is tRNA modification; N(7)-methylguanine-tRNA biosynthesis. Catalyzes the formation of N(7)-methylguanine at position 46 (m7G46) in tRNA. This is tRNA (guanine-N(7)-)-methyltransferase from Rhodopseudomonas palustris (strain HaA2).